Consider the following 386-residue polypeptide: Tubulin beta-1 chain (386 aa).

Residues glutamate 7, serine 76, glycine 80, threonine 81, glycine 82, asparagine 142, and asparagine 164 each coordinate GTP. Mg(2+) is bound at residue glutamate 7. Residues 363–386 (YQDATADEEGEYEDEEEDLQAEDM) form a disordered region. The segment covering 367–386 (TADEEGEYEDEEEDLQAEDM) has biased composition (acidic residues).

The protein belongs to the tubulin family. Dimer of alpha and beta chains. A typical microtubule is a hollow water-filled tube with an outer diameter of 25 nm and an inner diameter of 15 nM. Alpha-beta heterodimers associate head-to-tail to form protofilaments running lengthwise along the microtubule wall with the beta-tubulin subunit facing the microtubule plus end conferring a structural polarity. Microtubules usually have 13 protofilaments but different protofilament numbers can be found in some organisms and specialized cells. Mg(2+) serves as cofactor.

The protein resides in the cytoplasm. It is found in the cytoskeleton. Tubulin is the major constituent of microtubules, a cylinder consisting of laterally associated linear protofilaments composed of alpha- and beta-tubulin heterodimers. Microtubules grow by the addition of GTP-tubulin dimers to the microtubule end, where a stabilizing cap forms. Below the cap, tubulin dimers are in GDP-bound state, owing to GTPase activity of alpha-tubulin. The protein is Tubulin beta-1 chain (TUBB1) of Avena sativa (Oat).